Consider the following 424-residue polypeptide: UDP-N-acetylglucosamine 1-carboxyvinyltransferase (424 aa).

22-23 (KN) is a binding site for phosphoenolpyruvate. Arg93 provides a ligand contact to UDP-N-acetyl-alpha-D-glucosamine. Residue Cys117 is the Proton donor of the active site. Cys117 carries the 2-(S-cysteinyl)pyruvic acid O-phosphothioketal modification. UDP-N-acetyl-alpha-D-glucosamine contacts are provided by residues 162–165 (KVSV), Asp307, and Ile329.

The protein belongs to the EPSP synthase family. MurA subfamily.

It is found in the cytoplasm. The enzyme catalyses phosphoenolpyruvate + UDP-N-acetyl-alpha-D-glucosamine = UDP-N-acetyl-3-O-(1-carboxyvinyl)-alpha-D-glucosamine + phosphate. It participates in cell wall biogenesis; peptidoglycan biosynthesis. Its function is as follows. Cell wall formation. Adds enolpyruvyl to UDP-N-acetylglucosamine. The sequence is that of UDP-N-acetylglucosamine 1-carboxyvinyltransferase from Actinobacillus pleuropneumoniae serotype 5b (strain L20).